The sequence spans 366 residues: Ribosomal RNA large subunit methyltransferase M (366 aa).

Residues S188, 221–224 (CPGG), D240, D260, and D277 contribute to the S-adenosyl-L-methionine site. K306 (proton acceptor) is an active-site residue.

This sequence belongs to the class I-like SAM-binding methyltransferase superfamily. RNA methyltransferase RlmE family. RlmM subfamily. In terms of assembly, monomer.

It localises to the cytoplasm. It carries out the reaction cytidine(2498) in 23S rRNA + S-adenosyl-L-methionine = 2'-O-methylcytidine(2498) in 23S rRNA + S-adenosyl-L-homocysteine + H(+). In terms of biological role, catalyzes the 2'-O-methylation at nucleotide C2498 in 23S rRNA. The sequence is that of Ribosomal RNA large subunit methyltransferase M from Salmonella arizonae (strain ATCC BAA-731 / CDC346-86 / RSK2980).